The sequence spans 302 residues: Actin maturation protease (302 aa).

A disordered region spans residues 1-26 (MPHTNEDPTAQQAGVILDPPPPLPPP). Residues 85–205 (SLIQEGPQCG…WAVISGVLFG (121 aa)) form a peptidase C39-like region. The active site involves Cys-93.

This sequence belongs to the ACTMAP family.

The protein resides in the cytoplasm. The enzyme catalyses N-terminal N(alpha)-acetyl-L-methionyl-L-aspartyl-[protein] + H2O = N-terminal L-aspartyl-[protein] + N-acetyl-L-methionine. The catalysed reaction is N-terminal N(alpha)-acetyl-L-methionyl-L-glutamyl-[protein] + H2O = N-terminal L-glutamyl-[protein] + N-acetyl-L-methionine. It carries out the reaction N-terminal N(alpha)-acetyl-L-cysteinyl-L-aspartyl-[protein] + H2O = N-terminal L-aspartyl-[protein] + N-acetyl-L-cysteine. It catalyses the reaction N-terminal N(alpha)-acetyl-L-cysteinyl-L-glutamyl-[protein] + H2O = N-terminal L-glutamyl-[protein] + N-acetyl-L-cysteine. Functionally, actin maturation protease that specifically mediates the cleavage of immature acetylated N-terminal actin, thereby contributing to actin maturation. Cleaves N-terminal acetylated methionine of immature cytoplasmic beta- and gamma-actin after translation. Cleaves N-terminal acetylated cysteine of muscle alpha-actin after canonical removal of N-terminal methionine. This chain is Actin maturation protease, found in Xenopus tropicalis (Western clawed frog).